Reading from the N-terminus, the 325-residue chain is Hydroxymethylglutaryl-CoA lyase, mitochondrial (325 aa).

Residues 1–27 constitute a mitochondrion transit peptide; sequence MAAMRKALPRRLVGLASLRAVSTSSMG. One can recognise a Pyruvate carboxyltransferase domain in the interval 33–300; that stretch reads VKIVEVGPRD…HTGVNLQKLL (268 aa). Position 41 (Arg-41) interacts with substrate. Asp-42 serves as a coordination point for a divalent metal cation. Lys-48 carries the N6-acetyllysine; alternate modification. The residue at position 48 (Lys-48) is an N6-succinyllysine; alternate. Lys-111 is subject to N6-acetyllysine. 2 positions are modified to N6-acetyllysine; alternate: Lys-137 and Lys-179. Residues Lys-137 and Lys-179 each carry the N6-succinyllysine; alternate modification. His-233 and His-235 together coordinate a divalent metal cation. Cys-266 is an active-site residue. Asn-275 provides a ligand contact to a divalent metal cation. A Microbody targeting signal motif is present at residues 323–325; it reads CKL. Position 324 is an N6-acetyllysine (Lys-324).

It belongs to the HMG-CoA lyase family. Homodimer; disulfide-linked. Can also form homotetramers. A divalent metal cation serves as cofactor. As to expression, highest expression in liver. Expressed in pancreas, kidney, intestine, testis, fibroblasts and lymphoblasts. Very low expression in brain and skeletal muscle. The relative expression of isoform 2 (at mRNA level) is highest in heart (30%), skeletal muscle (22%), and brain (14%).

It is found in the mitochondrion matrix. The protein resides in the peroxisome. The enzyme catalyses (3S)-3-hydroxy-3-methylglutaryl-CoA = acetoacetate + acetyl-CoA. The protein operates within metabolic intermediate metabolism; (S)-3-hydroxy-3-methylglutaryl-CoA degradation; acetoacetate from (S)-3-hydroxy-3-methylglutaryl-CoA: step 1/1. Its activity is regulated as follows. Stimulated by reducing agents such as dithiothreitol (DTT). Mitochondrial 3-hydroxy-3-methylglutaryl-CoA lyase that catalyzes a cation-dependent cleavage of (S)-3-hydroxy-3-methylglutaryl-CoA into acetyl-CoA and acetoacetate, a key step in ketogenesis. Terminal step in leucine catabolism. Ketone bodies (beta-hydroxybutyrate, acetoacetate and acetone) are essential as an alternative source of energy to glucose, as lipid precursors and as regulators of metabolism. This is Hydroxymethylglutaryl-CoA lyase, mitochondrial (HMGCL) from Homo sapiens (Human).